The sequence spans 312 residues: Ribonuclease Z (312 aa).

Positions 63, 65, 67, 68, 141, 212, and 270 each coordinate Zn(2+). Residue Asp-67 is the Proton acceptor of the active site.

It belongs to the RNase Z family. Homodimer. Zn(2+) serves as cofactor.

The enzyme catalyses Endonucleolytic cleavage of RNA, removing extra 3' nucleotides from tRNA precursor, generating 3' termini of tRNAs. A 3'-hydroxy group is left at the tRNA terminus and a 5'-phosphoryl group is left at the trailer molecule.. Its function is as follows. Zinc phosphodiesterase, which displays some tRNA 3'-processing endonuclease activity. Probably involved in tRNA maturation, by removing a 3'-trailer from precursor tRNA. The chain is Ribonuclease Z from Latilactobacillus sakei subsp. sakei (strain 23K) (Lactobacillus sakei subsp. sakei).